Consider the following 699-residue polypeptide: Kinesin-like protein KIF3A (699 aa).

Positions 14–345 (NVKVVVRCRP…LRYANRAKNI (332 aa)) constitute a Kinesin motor domain. 100–107 (GQTGTGKT) provides a ligand contact to ATP. Residues 355–590 (PKDALLRQFQ…LSRELRLQML (236 aa)) are a coiled coil. 2 disordered regions span residues 372–421 (KKLE…KMIE) and 663–699 (SLMKLERPRTSKGKARPKTGRRKRSAKPETVIDSLLQ). Positions 376–400 (EGEEISGSDISGSEEDDDEEGEVGE) are enriched in acidic residues. Over residues 672 to 687 (TSKGKARPKTGRRKRS) the composition is skewed to basic residues. Phosphoserine is present on S687. A globular region spans residues 697–699 (LLQ).

The protein belongs to the TRAFAC class myosin-kinesin ATPase superfamily. Kinesin family. Kinesin II subfamily. In terms of assembly, heterodimer of KIF3A and KIF3B. Interacts with CIMAP3. Interacts with CLN3. Interacts with DCTN1. Interacts with FLCN. Interacts with AP3B1.

Its subcellular location is the cytoplasm. The protein resides in the cytoskeleton. It localises to the cell projection. It is found in the cilium. The protein localises to the microtubule organizing center. Its subcellular location is the centrosome. The protein resides in the centriole. Microtubule-based anterograde translocator for membranous organelles. Plus end-directed microtubule sliding activity in vitro. Plays a role in primary cilia formation. Plays a role in centriole cohesion and subdistal appendage organization and function. Regulates the formation of the subdistal appendage via recruitment of DCTN1 to the centriole. Also required for ciliary basal feet formation and microtubule anchoring to mother centriole. In Homo sapiens (Human), this protein is Kinesin-like protein KIF3A (KIF3A).